Here is a 358-residue protein sequence, read N- to C-terminus: MSAYCGKYKDELIKNAAYIGTPGKGILAADESTGTIGKRFASINVENVEENRRSLRELLFTTPGALQHLSGVILFEETLYQKTKDGKPFVDVLKEGGVLPGIKVDKGTVEVAGTNKETTTQGHDDLGKRCAKYYEAGARFAKWRAVLKIGPNEPSQLSIDLNAQGLARYAIICQENGLVPIVEPEILVDGSHDIERCAYVTEKVLAACYKALNEHHVLLEGSLLKPNMVTPGSESKKVSPQLIAEYTVRALQRTVPAAVPAIVFLSGGQSEEEATVNLNAMNKLSTKKPWALSFSFGRALQQSTLKAWGGKTENVVKAQKAFITRCKANSEATLGTYQGDAVLGEGASESLHVKDYKY.

Position 39 (Arg-39) interacts with substrate. Glu-183 functions as the Proton acceptor in the catalytic mechanism. Lys-225 (schiff-base intermediate with dihydroxyacetone-P) is an active-site residue. Substrate is bound by residues 266 to 268 (SGG) and Arg-298.

This sequence belongs to the class I fructose-bisphosphate aldolase family. As to quaternary structure, homotetramer.

The protein localises to the cytoplasm. It is found in the cytosol. It carries out the reaction beta-D-fructose 1,6-bisphosphate = D-glyceraldehyde 3-phosphate + dihydroxyacetone phosphate. It participates in carbohydrate degradation; glycolysis; D-glyceraldehyde 3-phosphate and glycerone phosphate from D-glucose: step 4/4. Functionally, fructose-bisphosphate aldolase that plays a key role in glycolysis and gluconeogenesis. This Oryza sativa subsp. japonica (Rice) protein is Fructose-bisphosphate aldolase 3, cytoplasmic.